We begin with the raw amino-acid sequence, 440 residues long: Polyprenol-phosphate-mannose-dependent alpha-(1-2)-phosphatidylinositol mannoside mannosyltransferase (440 aa).

11 helical membrane-spanning segments follow: residues 15–35 (LAPT…VLWV), 87–107 (LAAI…SSAI), 109–129 (ATTL…LDVW), 144–161 (AWLA…LEPI), 164–184 (NFEF…DCVP), 193–213 (LLLG…LYFL), 224–244 (TAAT…SDSV), 281–301 (PRFI…VWAA), 316–336 (APVL…PVSW), 360–380 (VWFT…PITL), and 395–415 (LAGG…GLVS). Residues 419-440 (THTGDAHETDEPLVPLARGEAG) form a disordered region.

The protein belongs to the glycosyltransferase 87 family.

The protein resides in the cell membrane. It functions in the pathway phospholipid metabolism; phosphatidylinositol metabolism. In terms of biological role, responsible for the addition of alpha-(1-2) mannose branches to the linear mannan core on the biosynthetic pathway to mature Lipoarabinomannan (LAM). This is Polyprenol-phosphate-mannose-dependent alpha-(1-2)-phosphatidylinositol mannoside mannosyltransferase from Mycolicibacterium smegmatis (strain ATCC 700084 / mc(2)155) (Mycobacterium smegmatis).